The chain runs to 172 residues: NADH-quinone oxidoreductase subunit B 1 (172 aa).

[4Fe-4S] cluster-binding residues include Cys42, Cys43, Cys107, and Cys137.

Belongs to the complex I 20 kDa subunit family. As to quaternary structure, NDH-1 is composed of 14 different subunits. Subunits NuoB, C, D, E, F, and G constitute the peripheral sector of the complex. [4Fe-4S] cluster is required as a cofactor.

It is found in the cell inner membrane. The catalysed reaction is a quinone + NADH + 5 H(+)(in) = a quinol + NAD(+) + 4 H(+)(out). Functionally, NDH-1 shuttles electrons from NADH, via FMN and iron-sulfur (Fe-S) centers, to quinones in the respiratory chain. Couples the redox reaction to proton translocation (for every two electrons transferred, four hydrogen ions are translocated across the cytoplasmic membrane), and thus conserves the redox energy in a proton gradient. The protein is NADH-quinone oxidoreductase subunit B 1 of Anaeromyxobacter sp. (strain Fw109-5).